We begin with the raw amino-acid sequence, 488 residues long: Probable glycine dehydrogenase (decarboxylating) subunit 2 (488 aa).

Residue Lys-274 is modified to N6-(pyridoxal phosphate)lysine.

It belongs to the GcvP family. C-terminal subunit subfamily. In terms of assembly, the glycine cleavage system is composed of four proteins: P, T, L and H. In this organism, the P 'protein' is a heterodimer of two subunits. The cofactor is pyridoxal 5'-phosphate.

The enzyme catalyses N(6)-[(R)-lipoyl]-L-lysyl-[glycine-cleavage complex H protein] + glycine + H(+) = N(6)-[(R)-S(8)-aminomethyldihydrolipoyl]-L-lysyl-[glycine-cleavage complex H protein] + CO2. The glycine cleavage system catalyzes the degradation of glycine. The P protein binds the alpha-amino group of glycine through its pyridoxal phosphate cofactor; CO(2) is released and the remaining methylamine moiety is then transferred to the lipoamide cofactor of the H protein. The protein is Probable glycine dehydrogenase (decarboxylating) subunit 2 of Listeria monocytogenes serotype 4b (strain F2365).